Reading from the N-terminus, the 242-residue chain is Probable ABC transporter ATP-binding protein PEB1C (242 aa).

The ABC transporter domain maps to 2–236 (IELKNVNKYY…PKTERARLFL (235 aa)). 34–41 (GPSGSGKS) contributes to the ATP binding site.

The protein belongs to the ABC transporter superfamily.

It is found in the cell inner membrane. In terms of biological role, most probably involved, with PEB1, in a binding-protein-dependent transport system for an amino acid. Probably responsible for energy coupling to the transport system. In Campylobacter jejuni subsp. jejuni serotype O:2 (strain ATCC 700819 / NCTC 11168), this protein is Probable ABC transporter ATP-binding protein PEB1C (peb1C).